The sequence spans 89 residues: Small ribosomal subunit protein uS15 (89 aa).

This sequence belongs to the universal ribosomal protein uS15 family. Part of the 30S ribosomal subunit. Forms a bridge to the 50S subunit in the 70S ribosome, contacting the 23S rRNA.

One of the primary rRNA binding proteins, it binds directly to 16S rRNA where it helps nucleate assembly of the platform of the 30S subunit by binding and bridging several RNA helices of the 16S rRNA. In terms of biological role, forms an intersubunit bridge (bridge B4) with the 23S rRNA of the 50S subunit in the ribosome. This is Small ribosomal subunit protein uS15 from Rippkaea orientalis (strain PCC 8801 / RF-1) (Cyanothece sp. (strain PCC 8801)).